A 415-amino-acid polypeptide reads, in one-letter code: Diaminopimelate decarboxylase (415 aa).

The residue at position 60 (K60) is an N6-(pyridoxal phosphate)lysine. Residues G239 and 274–277 (EPGR) each bind pyridoxal 5'-phosphate. Residues R277, R313, and Y317 each coordinate substrate. C344 (proton donor) is an active-site residue. The substrate site is built by E345 and Y372. Y372 contributes to the pyridoxal 5'-phosphate binding site.

The protein belongs to the Orn/Lys/Arg decarboxylase class-II family. LysA subfamily. In terms of assembly, homodimer. It depends on pyridoxal 5'-phosphate as a cofactor.

The catalysed reaction is meso-2,6-diaminopimelate + H(+) = L-lysine + CO2. It participates in amino-acid biosynthesis; L-lysine biosynthesis via DAP pathway; L-lysine from DL-2,6-diaminopimelate: step 1/1. Specifically catalyzes the decarboxylation of meso-diaminopimelate (meso-DAP) to L-lysine. This chain is Diaminopimelate decarboxylase, found in Haemophilus influenzae (strain ATCC 51907 / DSM 11121 / KW20 / Rd).